The chain runs to 167 residues: Transcription antitermination protein NusB (167 aa).

A disordered region spans residues 1 to 21; the sequence is MIPTDTAPPSKPAQGHKGYKN.

This sequence belongs to the NusB family.

In terms of biological role, involved in transcription antitermination. Required for transcription of ribosomal RNA (rRNA) genes. Binds specifically to the boxA antiterminator sequence of the ribosomal RNA (rrn) operons. The chain is Transcription antitermination protein NusB from Nitrosomonas eutropha (strain DSM 101675 / C91 / Nm57).